The following is a 24-amino-acid chain: Metallothionein (24 aa).

Cd(2+)-binding residues include C3, C5, C8, C10, C17, C19, and C22.

Belongs to the metallothionein superfamily. Type 8 family. Post-translationally, contains 4 disulfide bonds.

In terms of biological role, metallothioneins have a high content of cysteine residues that bind various heavy metals. This is Metallothionein from Neonectria lugdunensis (Aquatic fungus).